The chain runs to 333 residues: Gamma-D-glutamyl-L-lysine dipeptidyl-peptidase (333 aa).

The first 23 residues, 1–23, serve as a signal peptide directing secretion; sequence MKKVGTAFLTTLFIFSSFTSAHA. Substrate is bound by residues glutamate 83, tyrosine 118, 237 to 239, and 256 to 257; these read DCS and DS. One can recognise a NlpC/P60 domain in the interval 208-332; it reads TPAADDLINT…EEYAGARRYL (125 aa). Residue cysteine 238 is the Nucleophile of the active site. The active-site Proton acceptor is the histidine 291. Histidine 303 is an active-site residue.

Belongs to the peptidase C40 family. As to quaternary structure, monomer in solution.

The catalysed reaction is The enzyme releases L-Ala-gamma-D-Glu dipeptides from cell wall peptides via cleavage of an L-Ala-gamma-D-Glu-|-L-Lys bond.. The protein operates within cell wall degradation; peptidoglycan degradation. In terms of biological role, specifically hydrolyzes gamma-D-glutamyl-L-lysine bonds in murein peptides, releasing L-Ala-D-Glu. The chain is Gamma-D-glutamyl-L-lysine dipeptidyl-peptidase from Bacillus cereus (strain ATCC 10987 / NRS 248).